A 452-amino-acid chain; its full sequence is MSPQTETKASVGFKAGVKDYKLTYYTPDYETKDTDILAAFRVTPQPGVPPXXXXXXXXXESSTGTWTTVWTDGXTSLDRXXXXXXXXXXVPGEENQYIAYVAYPLDLFEEGSVTNMFTSIVGNVFGFKALRALRLEDLRIPPAYSKTFLGPPHGIQVERDKLNKYGRPLLGCTIKPKLGLSAKNYGRAVYECLRGGLDFTKDDENVNSQPFMRWRXXFLFCAEALYKAQAETGEIKGHYLNATAGTCEEMIKRAVFARELGVPIVMHDYLTGGFTANTSLAHYCRDNGLLLHIHRAMHAVIDRQKNHGXXFRVXXKALRMSGGDHIXXGTVVGKLEGDRESTLGFVDLLRDDYIEKDRSRGIFFTQDWVSMPGVIPVASGGIHVWHMPALTEIFGDDAVLQFGGGTLGHPWGNAPGAVANRVALEACVQARNEGRDLAVEGNEIIREASKWS.

Residues 1–2 (MS) constitute a propeptide that is removed on maturation. N-acetylproline is present on P3. K14 bears the N6,N6,N6-trimethyllysine mark. Substrate is bound by residues N123 and T173. Residue K175 is the Proton acceptor of the active site. K177 serves as a coordination point for substrate. Residues K201, D203, and E204 each coordinate Mg(2+). The residue at position 201 (K201) is an N6-carboxylysine. The active-site Proton acceptor is H294. R295, X327, and S379 together coordinate substrate.

Belongs to the RuBisCO large chain family. Type I subfamily. Heterohexadecamer of 8 large chains and 8 small chains; disulfide-linked. The disulfide link is formed within the large subunit homodimers. Mg(2+) serves as cofactor. Post-translationally, the disulfide bond which can form in the large chain dimeric partners within the hexadecamer appears to be associated with oxidative stress and protein turnover.

The protein resides in the plastid. It is found in the chloroplast. The catalysed reaction is 2 (2R)-3-phosphoglycerate + 2 H(+) = D-ribulose 1,5-bisphosphate + CO2 + H2O. The enzyme catalyses D-ribulose 1,5-bisphosphate + O2 = 2-phosphoglycolate + (2R)-3-phosphoglycerate + 2 H(+). Its function is as follows. RuBisCO catalyzes two reactions: the carboxylation of D-ribulose 1,5-bisphosphate, the primary event in carbon dioxide fixation, as well as the oxidative fragmentation of the pentose substrate in the photorespiration process. Both reactions occur simultaneously and in competition at the same active site. The protein is Ribulose bisphosphate carboxylase large chain of Salvadora persica (Toothbrush tree).